Consider the following 198-residue polypeptide: ATP-dependent Clp protease proteolytic subunit 2 (198 aa).

The active-site Nucleophile is S94. H119 is an active-site residue.

It belongs to the peptidase S14 family. Fourteen ClpP subunits assemble into 2 heptameric rings which stack back to back to give a disk-like structure with a central cavity, resembling the structure of eukaryotic proteasomes.

The protein localises to the cytoplasm. The catalysed reaction is Hydrolysis of proteins to small peptides in the presence of ATP and magnesium. alpha-casein is the usual test substrate. In the absence of ATP, only oligopeptides shorter than five residues are hydrolyzed (such as succinyl-Leu-Tyr-|-NHMec, and Leu-Tyr-Leu-|-Tyr-Trp, in which cleavage of the -Tyr-|-Leu- and -Tyr-|-Trp bonds also occurs).. Its function is as follows. Cleaves peptides in various proteins in a process that requires ATP hydrolysis. Has a chymotrypsin-like activity. Plays a major role in the degradation of misfolded proteins. The sequence is that of ATP-dependent Clp protease proteolytic subunit 2 from Borreliella burgdorferi (strain ATCC 35210 / DSM 4680 / CIP 102532 / B31) (Borrelia burgdorferi).